The primary structure comprises 535 residues: EH domain-containing protein 3 (535 aa).

Met1 is subject to N-acetylmethionine. One can recognise a Dynamin-type G domain in the interval 55-286 (FDNKPMVLLV…DLFRDIQSLP (232 aa)). Residues 65–72 (GQYSTGKT) form a G1 motif region. 65 to 72 (GQYSTGKT) is an ATP binding site. The segment at 91–92 (EP) is G2 motif. The G3 motif stretch occupies residues 153 to 156 (DTPG). Residues 198 to 227 (DEFSEVIKALKNHEDKMRVVLNKADQIETQ) are a coiled coil. Residues 219–222 (NKAD) form a G4 motif region. Residue Lys220 participates in ATP binding. A region of interest (G5 motif) is located at residue Ile243. Trp258 provides a ligand contact to ATP. Residue Lys315 forms a Glycyl lysine isopeptide (Lys-Gly) (interchain with G-Cter in SUMO) linkage. Phosphoserine is present on residues Ser349 and Ser456. Positions 444 to 532 (DKPMYDEIFY…AHLLPPSKRK (89 aa)) constitute an EH domain. The EF-hand domain occupies 476 to 511 (LPNSVLGKIWKLADIDKDGMLDDEEFALANHLIKVK). Ca(2+) contacts are provided by Asp489, Asp491, Asp493, Met495, and Glu500. A Glycyl lysine isopeptide (Lys-Gly) (interchain with G-Cter in SUMO) cross-link involves residue Lys511.

This sequence belongs to the TRAFAC class dynamin-like GTPase superfamily. Dynamin/Fzo/YdjA family. EHD subfamily. Homooligomer. Heterooligomer with EHD1. Heterooligomer with EHD2 and EHD4; ATP-binding is required for heterooligomerization. Interacts with PACSIN1. Interacts with PACSIN2. Interacts (via EH domain) with MICALL1. Interacts (via EH domain) with RAB11FIP2. Interacts with ANK2. Interacts with CACNA1GG and CACNA1H. In terms of tissue distribution, strong expression seen in the kidney, brain and liver. In the kidney, expressed exclusively by glomerular endothelial cells; at protein level. Expressed in skeletal muscle neuromuscular junction perisynaptic region; at protein level.

It is found in the recycling endosome membrane. The protein localises to the cell membrane. It localises to the cell projection. The protein resides in the cilium membrane. Its subcellular location is the cytoplasmic vesicle. In terms of biological role, ATP- and membrane-binding protein that controls membrane reorganization/tubulation upon ATP hydrolysis. In vitro causes tubulation of endocytic membranes. Binding to phosphatidic acid induces its membrane tubulation activity. Plays a role in endocytic transport. Involved in early endosome to recycling endosome compartment (ERC), retrograde early endosome to Golgi, and endosome to plasma membrane (rapid recycling) protein transport. Involved in the regulation of Golgi maintenance and morphology. Involved in the recycling of internalized D1 dopamine receptor. Plays a role in cardiac protein trafficking probably implicating ANK2. Involved in the ventricular membrane targeting of SLC8A1 and CACNA1C and probably the atrial membrane localization of CACNA1GG and CACNA1H implicated in the regulation of atrial myocyte excitability and cardiac conduction. In conjunction with EHD4 may be involved in endocytic trafficking of KDR/VEGFR2 implicated in control of glomerular function. Involved in the rapid recycling of integrin beta-3 implicated in cell adhesion maintenance. Involved in the unidirectional retrograde dendritic transport of endocytosed BACE1 and in efficient sorting of BACE1 to axons implicating a function in neuronal APP processing. Plays a role in the formation of the ciliary vesicle, an early step in cilium biogenesis; possibly sharing redundant functions with Ehd1. In Mus musculus (Mouse), this protein is EH domain-containing protein 3.